The chain runs to 205 residues: Molybdopterin synthase catalytic subunit (205 aa).

The segment at 1–36 is disordered; sequence MQHPTLQPEVDPNPVVSSSSSSSSSNPLPAHLNPAN. Residues 146-147, Lys-162, and 169-171 contribute to the substrate site; these read HR and KRE. The segment at 179 to 205 is disordered; that stretch reads GEGEGEWRANRDTDSQGNCRGDKVAEG. Positions 183 to 205 are enriched in basic and acidic residues; sequence GEWRANRDTDSQGNCRGDKVAEG.

Belongs to the MoaE family. MOCS2B subfamily. In terms of assembly, heterotetramer; composed of 2 small (MOCS2A) and 2 large (MOCS2B) subunits.

The protein resides in the cytoplasm. The enzyme catalyses 2 [molybdopterin-synthase sulfur-carrier protein]-C-terminal-Gly-aminoethanethioate + cyclic pyranopterin phosphate + H2O = molybdopterin + 2 [molybdopterin-synthase sulfur-carrier protein]-C-terminal Gly-Gly + 2 H(+). The protein operates within cofactor biosynthesis; molybdopterin biosynthesis. In terms of biological role, catalytic subunit of the molybdopterin synthase complex, a complex that catalyzes the conversion of precursor Z into molybdopterin. Acts by mediating the incorporation of 2 sulfur atoms from thiocarboxylated MOCS2A into precursor Z to generate a dithiolene group. This is Molybdopterin synthase catalytic subunit from Ajellomyces capsulatus (strain NAm1 / WU24) (Darling's disease fungus).